We begin with the raw amino-acid sequence, 96 residues long: Integration host factor subunit alpha (96 aa).

It belongs to the bacterial histone-like protein family. Heterodimer of an alpha and a beta chain.

Its function is as follows. This protein is one of the two subunits of integration host factor, a specific DNA-binding protein that functions in genetic recombination as well as in transcriptional and translational control. This is Integration host factor subunit alpha from Haemophilus influenzae (strain 86-028NP).